The sequence spans 209 residues: Thiamine-phosphate synthase (209 aa).

4-amino-2-methyl-5-(diphosphooxymethyl)pyrimidine is bound by residues 39-43 and asparagine 71; that span reads QLREK. The Mg(2+) site is built by aspartate 72 and aspartate 91. 4-amino-2-methyl-5-(diphosphooxymethyl)pyrimidine is bound at residue serine 110. 136–138 is a binding site for 2-[(2R,5Z)-2-carboxy-4-methylthiazol-5(2H)-ylidene]ethyl phosphate; sequence TGT. Lysine 139 contributes to the 4-amino-2-methyl-5-(diphosphooxymethyl)pyrimidine binding site. Residues glycine 166 and 186 to 187 each bind 2-[(2R,5Z)-2-carboxy-4-methylthiazol-5(2H)-ylidene]ethyl phosphate; that span reads VS.

The protein belongs to the thiamine-phosphate synthase family. The cofactor is Mg(2+).

The enzyme catalyses 2-[(2R,5Z)-2-carboxy-4-methylthiazol-5(2H)-ylidene]ethyl phosphate + 4-amino-2-methyl-5-(diphosphooxymethyl)pyrimidine + 2 H(+) = thiamine phosphate + CO2 + diphosphate. It carries out the reaction 2-(2-carboxy-4-methylthiazol-5-yl)ethyl phosphate + 4-amino-2-methyl-5-(diphosphooxymethyl)pyrimidine + 2 H(+) = thiamine phosphate + CO2 + diphosphate. It catalyses the reaction 4-methyl-5-(2-phosphooxyethyl)-thiazole + 4-amino-2-methyl-5-(diphosphooxymethyl)pyrimidine + H(+) = thiamine phosphate + diphosphate. It functions in the pathway cofactor biosynthesis; thiamine diphosphate biosynthesis; thiamine phosphate from 4-amino-2-methyl-5-diphosphomethylpyrimidine and 4-methyl-5-(2-phosphoethyl)-thiazole: step 1/1. Its function is as follows. Condenses 4-methyl-5-(beta-hydroxyethyl)thiazole monophosphate (THZ-P) and 2-methyl-4-amino-5-hydroxymethyl pyrimidine pyrophosphate (HMP-PP) to form thiamine monophosphate (TMP). This chain is Thiamine-phosphate synthase, found in Clostridium beijerinckii (strain ATCC 51743 / NCIMB 8052) (Clostridium acetobutylicum).